The primary structure comprises 443 residues: Ribosomal protein uS12 methylthiotransferase RimO (443 aa).

Residues 11–121 (PTVGFVSLGC…VMEAVHGALP (111 aa)) enclose the MTTase N-terminal domain. Residues cysteine 20, cysteine 56, cysteine 85, cysteine 152, cysteine 156, and cysteine 159 each coordinate [4Fe-4S] cluster. The 238-residue stretch at 138 to 375 (LTPRHYAYLK…METQAEISAA (238 aa)) folds into the Radical SAM core domain. Positions 378 to 443 (DAKIGRTIEV…DAHDLWATPV (66 aa)) constitute a TRAM domain.

It belongs to the methylthiotransferase family. RimO subfamily. [4Fe-4S] cluster serves as cofactor.

It is found in the cytoplasm. The enzyme catalyses L-aspartate(89)-[ribosomal protein uS12]-hydrogen + (sulfur carrier)-SH + AH2 + 2 S-adenosyl-L-methionine = 3-methylsulfanyl-L-aspartate(89)-[ribosomal protein uS12]-hydrogen + (sulfur carrier)-H + 5'-deoxyadenosine + L-methionine + A + S-adenosyl-L-homocysteine + 2 H(+). Its function is as follows. Catalyzes the methylthiolation of an aspartic acid residue of ribosomal protein uS12. The polypeptide is Ribosomal protein uS12 methylthiotransferase RimO (Thiobacillus denitrificans (strain ATCC 25259 / T1)).